The primary structure comprises 241 residues: Tetraspanin-1 (241 aa).

The next 3 membrane-spanning stretches (helical) occupy residues 12–32 (ILFN…GIWV), 53–73 (FVNV…LGFL), and 89–109 (FFSI…VALV). Asn154 is a glycosylation site (N-linked (GlcNAc...) asparagine). The chain crosses the membrane as a helical span at residues 212–232 (AVTVGGVAVGVAALELAAMVV).

Belongs to the tetraspanin (TM4SF) family. In terms of assembly, interacts with SLC19A2. Interacts with NTRK1/TRKA.

It localises to the cell membrane. The protein localises to the lysosome membrane. Structural component of specialized membrane microdomains known as tetraspanin-enriched microdomains (TERMs), which act as platforms for receptor clustering and signaling. Participates thereby in diverse biological functions such as cell signal transduction, adhesion, migration and protein trafficking. Regulates neuronal differentiation in response to NGF by facilitating NGF-mediated activation of NTRK1/TRKA receptor tyrosine kinase and subsequent downstream signaling pathways. Plays a role in the inhibition of TNFalpha-induced apoptosis. Mechanistically, inhibits the NF-kappa-B signaling pathway by blocking phosphorylation of CHUK. Also promotes the stability of the thiamine transporter 1/SLC19A2 in intestinal epithelial cells leading to an increase of thiamine uptake process. The chain is Tetraspanin-1 (Tspan1) from Rattus norvegicus (Rat).